The sequence spans 197 residues: Holliday junction branch migration complex subunit RuvA (197 aa).

The interval 1–63 (MFEYLNGKLV…EDAHSLYGFV (63 aa)) is domain I. A domain II region spans residues 64 to 142 (NESEKALFLR…ATGAVGISLL (79 aa)). The segment at 142 to 146 (LDAAP) is flexible linker. Residues 147–197 (AGNLALEEAIEALQALGYKATELKKIEKKLEQEAGLTSEEYIKSALKLMMK) form a domain III region.

It belongs to the RuvA family. Homotetramer. Forms an RuvA(8)-RuvB(12)-Holliday junction (HJ) complex. HJ DNA is sandwiched between 2 RuvA tetramers; dsDNA enters through RuvA and exits via RuvB. An RuvB hexamer assembles on each DNA strand where it exits the tetramer. Each RuvB hexamer is contacted by two RuvA subunits (via domain III) on 2 adjacent RuvB subunits; this complex drives branch migration. In the full resolvosome a probable DNA-RuvA(4)-RuvB(12)-RuvC(2) complex forms which resolves the HJ.

The protein resides in the cytoplasm. The RuvA-RuvB-RuvC complex processes Holliday junction (HJ) DNA during genetic recombination and DNA repair, while the RuvA-RuvB complex plays an important role in the rescue of blocked DNA replication forks via replication fork reversal (RFR). RuvA specifically binds to HJ cruciform DNA, conferring on it an open structure. The RuvB hexamer acts as an ATP-dependent pump, pulling dsDNA into and through the RuvAB complex. HJ branch migration allows RuvC to scan DNA until it finds its consensus sequence, where it cleaves and resolves the cruciform DNA. The sequence is that of Holliday junction branch migration complex subunit RuvA from Lactococcus lactis subsp. cremoris (strain SK11).